A 478-amino-acid chain; its full sequence is Siroheme synthase (478 aa).

The interval 1–207 (MTANVLFPLF…QRHAEAEAVL (207 aa)) is precorrin-2 dehydrogenase /sirohydrochlorin ferrochelatase. NAD(+) contacts are provided by residues 25 to 26 (KV) and 46 to 47 (PS). A Phosphoserine modification is found at Ser-132. Positions 220-478 (GSVTLVGAGA…PCPPRTHPIS (259 aa)) are uroporphyrinogen-III C-methyltransferase. The active-site Proton acceptor is the Asp-252. Catalysis depends on Lys-274, which acts as the Proton donor. S-adenosyl-L-methionine contacts are provided by residues 305-307 (GGD), Val-310, 335-336 (TA), Met-387, and Gly-416.

In the N-terminal section; belongs to the precorrin-2 dehydrogenase / sirohydrochlorin ferrochelatase family. It in the C-terminal section; belongs to the precorrin methyltransferase family.

It catalyses the reaction uroporphyrinogen III + 2 S-adenosyl-L-methionine = precorrin-2 + 2 S-adenosyl-L-homocysteine + H(+). The enzyme catalyses precorrin-2 + NAD(+) = sirohydrochlorin + NADH + 2 H(+). The catalysed reaction is siroheme + 2 H(+) = sirohydrochlorin + Fe(2+). It functions in the pathway cofactor biosynthesis; adenosylcobalamin biosynthesis; precorrin-2 from uroporphyrinogen III: step 1/1. Its pathway is cofactor biosynthesis; adenosylcobalamin biosynthesis; sirohydrochlorin from precorrin-2: step 1/1. The protein operates within porphyrin-containing compound metabolism; siroheme biosynthesis; precorrin-2 from uroporphyrinogen III: step 1/1. It participates in porphyrin-containing compound metabolism; siroheme biosynthesis; siroheme from sirohydrochlorin: step 1/1. It functions in the pathway porphyrin-containing compound metabolism; siroheme biosynthesis; sirohydrochlorin from precorrin-2: step 1/1. Its function is as follows. Multifunctional enzyme that catalyzes the SAM-dependent methylations of uroporphyrinogen III at position C-2 and C-7 to form precorrin-2 via precorrin-1. Then it catalyzes the NAD-dependent ring dehydrogenation of precorrin-2 to yield sirohydrochlorin. Finally, it catalyzes the ferrochelation of sirohydrochlorin to yield siroheme. The polypeptide is Siroheme synthase (Xylella fastidiosa (strain M23)).